The following is a 78-amino-acid chain: U7-lycotoxin-Ls1e (78 aa).

The first 22 residues, 1 to 22, serve as a signal peptide directing secretion; that stretch reads MKLIIFTGLALLLIVSLIDVEA. Residues 23 to 26 constitute a propeptide that is removed on maturation; the sequence is QNEG.

It belongs to the neurotoxin 19 (CSTX) family. 07 (U7-Lctx) subfamily. Post-translationally, contains 4 disulfide bonds. As to expression, expressed by the venom gland.

The protein localises to the secreted. This is U7-lycotoxin-Ls1e from Lycosa singoriensis (Wolf spider).